Here is a 222-residue protein sequence, read N- to C-terminus: Deoxyribose-phosphate aldolase (222 aa).

Residue Asp91 is the Proton donor/acceptor of the active site. The active-site Schiff-base intermediate with acetaldehyde is Lys153. The Proton donor/acceptor role is filled by Lys182.

Belongs to the DeoC/FbaB aldolase family. DeoC type 1 subfamily.

It localises to the cytoplasm. It catalyses the reaction 2-deoxy-D-ribose 5-phosphate = D-glyceraldehyde 3-phosphate + acetaldehyde. The protein operates within carbohydrate degradation; 2-deoxy-D-ribose 1-phosphate degradation; D-glyceraldehyde 3-phosphate and acetaldehyde from 2-deoxy-alpha-D-ribose 1-phosphate: step 2/2. Functionally, catalyzes a reversible aldol reaction between acetaldehyde and D-glyceraldehyde 3-phosphate to generate 2-deoxy-D-ribose 5-phosphate. The protein is Deoxyribose-phosphate aldolase of Mycoplasma capricolum subsp. capricolum (strain California kid / ATCC 27343 / NCTC 10154).